A 166-amino-acid chain; its full sequence is Interferon gamma (166 aa).

A signal peptide spans 1 to 23; the sequence is MKYTSYILALQLCVLLGFSGSYG. Pyrrolidone carboxylic acid is present on Q24. N39 and N106 each carry an N-linked (GlcNAc...) asparagine glycan.

It belongs to the type II (or gamma) interferon family. As to quaternary structure, homodimer. Interacts with IFNGR1 (via extracellular domain); this interaction promotes IFNGR1 dimerization. Released primarily from activated T lymphocytes.

It is found in the secreted. Its function is as follows. Type II interferon produced by immune cells such as T-cells and NK cells that plays crucial roles in antimicrobial, antiviral, and antitumor responses by activating effector immune cells and enhancing antigen presentation. Primarily signals through the JAK-STAT pathway after interaction with its receptor IFNGR1 to affect gene regulation. Upon IFNG binding, IFNGR1 intracellular domain opens out to allow association of downstream signaling components JAK2, JAK1 and STAT1, leading to STAT1 activation, nuclear translocation and transcription of IFNG-regulated genes. Many of the induced genes are transcription factors such as IRF1 that are able to further drive regulation of a next wave of transcription. Plays a role in class I antigen presentation pathway by inducing a replacement of catalytic proteasome subunits with immunoproteasome subunits. In turn, increases the quantity, quality, and repertoire of peptides for class I MHC loading. Increases the efficiency of peptide generation also by inducing the expression of activator PA28 that associates with the proteasome and alters its proteolytic cleavage preference. Up-regulates as well MHC II complexes on the cell surface by promoting expression of several key molecules such as cathepsins B/CTSB, H/CTSH, and L/CTSL. Participates in the regulation of hematopoietic stem cells during development and under homeostatic conditions by affecting their development, quiescence, and differentiation. In Cervus elaphus (Red deer), this protein is Interferon gamma (IFNG).